Here is a 532-residue protein sequence, read N- to C-terminus: Amidophosphoribosyltransferase 3, chloroplastic (532 aa).

The N-terminal 59 residues, Met1 to Ser59, are a transit peptide targeting the chloroplast. Cys77 serves as the catalytic Nucleophile. Residues Cys77 to Asn296 enclose the Glutamine amidotransferase type-2 domain. [4Fe-4S] cluster contacts are provided by Cys313, Cys459, Cys511, and Cys514.

It in the C-terminal section; belongs to the purine/pyrimidine phosphoribosyltransferase family. [4Fe-4S] cluster serves as cofactor. The cofactor is Mg(2+). In terms of tissue distribution, mostly expressed at low levels in leaves, and, to a lower extent, in cotyledons.

It is found in the plastid. The protein localises to the chloroplast stroma. It carries out the reaction 5-phospho-beta-D-ribosylamine + L-glutamate + diphosphate = 5-phospho-alpha-D-ribose 1-diphosphate + L-glutamine + H2O. It participates in purine metabolism; IMP biosynthesis via de novo pathway; N(1)-(5-phospho-D-ribosyl)glycinamide from 5-phospho-alpha-D-ribose 1-diphosphate: step 1/2. Inhibited by the phenyltriazole acetic acid compound [5-(4-chlorophenyl)-1-isopropyl-1H-[1,2,4]triazol-3-yl]-acetic acid (DAS734), a bleaching herbicide. Repressed by AMP, ADP, ATP and GTP, and slightly by GMP. In terms of biological role, catalyzes the first committed step of 'de novo' purine biosynthesis from glutamine. The chain is Amidophosphoribosyltransferase 3, chloroplastic (ASE3) from Arabidopsis thaliana (Mouse-ear cress).